A 769-amino-acid polypeptide reads, in one-letter code: Subtilisin-like protease 3 (769 aa).

Residues Asn68, Asn102, Asn108, Asn295, Asn316, and Asn356 are each glycosylated (N-linked (GlcNAc...) asparagine). Over residues 293 to 302 the composition is skewed to basic residues; that stretch reads KINHSNKHKN. The tract at residues 293–329 is disordered; the sequence is KINHSNKHKNNNNNNNNNDYHNNNKSNYHSHSSAKCQ. Residues 303–325 are compositionally biased toward low complexity; the sequence is NNNNNNNNDYHNNNKSNYHSHSS. Positions 345–756 constitute a Peptidase S8 domain; it reads GYDIIQMEEG…GGFINVYDLV (412 aa). Catalysis depends on Asp372, which acts as the Charge relay system. The disordered stretch occupies residues 468–493; that stretch reads NIKSSDNIKSSDNINSSDNIKSSDNN. N-linked (GlcNAc...) asparagine glycans are attached at residues Asn482 and Asn515. Residue His523 is the Charge relay system of the active site. N-linked (GlcNAc...) asparagine glycosylation is found at Asn584 and Asn616. Ser701 (charge relay system) is an active-site residue. Asn720 carries N-linked (GlcNAc...) asparagine glycosylation.

The protein belongs to the peptidase S8 family.

The protein localises to the secreted. The enzyme catalyses Hydrolysis of proteins with broad specificity for peptide bonds, and a preference for a large uncharged residue in P1. Hydrolyzes peptide amides.. Its function is as follows. Serine protease which may cleave PFN/profilin. The protein is Subtilisin-like protease 3 of Plasmodium falciparum (isolate 3D7).